Here is a 335-residue protein sequence, read N- to C-terminus: Methylthioribose-1-phosphate isomerase (335 aa).

Residues 43–45, Arg-86, and Gln-193 each bind substrate; that span reads RGA. The Proton donor role is filled by Asp-234. Substrate is bound at residue 244–245; that stretch reads NK.

Belongs to the eIF-2B alpha/beta/delta subunits family. MtnA subfamily.

The catalysed reaction is 5-(methylsulfanyl)-alpha-D-ribose 1-phosphate = 5-(methylsulfanyl)-D-ribulose 1-phosphate. It functions in the pathway amino-acid biosynthesis; L-methionine biosynthesis via salvage pathway; L-methionine from S-methyl-5-thio-alpha-D-ribose 1-phosphate: step 1/6. Functionally, catalyzes the interconversion of methylthioribose-1-phosphate (MTR-1-P) into methylthioribulose-1-phosphate (MTRu-1-P). This chain is Methylthioribose-1-phosphate isomerase, found in Parabacteroides distasonis (strain ATCC 8503 / DSM 20701 / CIP 104284 / JCM 5825 / NCTC 11152).